The following is a 256-amino-acid chain: ATP-dependent dethiobiotin synthetase BioD (256 aa).

Residue 13-18 coordinates ATP; the sequence is EVGKTY. Thr17 contributes to the Mg(2+) binding site. The active site involves Lys38. Residue Ser42 coordinates substrate. ATP-binding positions include Asp56, 118-121, and 187-188; these read EGAG and NR. Mg(2+) is bound by residues Asp56 and Glu118.

The protein belongs to the dethiobiotin synthetase family. As to quaternary structure, homodimer. The cofactor is Mg(2+).

The protein resides in the cytoplasm. It carries out the reaction (7R,8S)-7,8-diammoniononanoate + CO2 + ATP = (4R,5S)-dethiobiotin + ADP + phosphate + 3 H(+). Its pathway is cofactor biosynthesis; biotin biosynthesis; biotin from 7,8-diaminononanoate: step 1/2. In terms of biological role, catalyzes a mechanistically unusual reaction, the ATP-dependent insertion of CO2 between the N7 and N8 nitrogen atoms of 7,8-diaminopelargonic acid (DAPA, also called 7,8-diammoniononanoate) to form a ureido ring. This Rhodopirellula baltica (strain DSM 10527 / NCIMB 13988 / SH1) protein is ATP-dependent dethiobiotin synthetase BioD.